Here is a 245-residue protein sequence, read N- to C-terminus: Probable inactive carboxylesterase Os04g0669700 (245 aa).

Active-site charge relay system residues include S115 and H201.

Belongs to the AB hydrolase superfamily. AB hydrolase 2 family.

This is Probable inactive carboxylesterase Os04g0669700 from Oryza sativa subsp. japonica (Rice).